The chain runs to 146 residues: Single-stranded DNA-binding protein, mitochondrial (146 aa).

A mitochondrion-targeting transit peptide spans 1 to 16; the sequence is MLRNASAQILKQFVRH. Positions 29-140 constitute an SSB domain; that stretch reads INKVQILGRV…IIADNIVFLS (112 aa).

It localises to the mitochondrion. The protein resides in the mitochondrion matrix. It is found in the mitochondrion nucleoid. In terms of biological role, binds preferentially and cooperatively to pyrimidine rich single-stranded DNA (ss-DNA). May be required to maintain the copy number of mitochondrial DNA (mtDNA) and play a crucial role during mtDNA replication. Required for retinal ganglion cell differentiation and retinal integrity. This is Single-stranded DNA-binding protein, mitochondrial from Danio rerio (Zebrafish).